An 89-amino-acid chain; its full sequence is HssA/B-like protein 21 (89 aa).

The protein belongs to the hssA/B family.

The polypeptide is HssA/B-like protein 21 (hssl21) (Dictyostelium discoideum (Social amoeba)).